A 63-amino-acid polypeptide reads, in one-letter code: UPF0337 protein Atu0782 (63 aa).

The interval 1–63 (MGSTSDKIAG…DAVKGAVDRM (63 aa)) is disordered. The segment covering 51 to 63 (KAKDAVKGAVDRM) has biased composition (basic and acidic residues).

It belongs to the UPF0337 (CsbD) family.

In Agrobacterium fabrum (strain C58 / ATCC 33970) (Agrobacterium tumefaciens (strain C58)), this protein is UPF0337 protein Atu0782.